A 303-amino-acid polypeptide reads, in one-letter code: Diaminopimelate epimerase (303 aa).

Positions 15, 47, and 67 each coordinate substrate. C76 (proton donor) is an active-site residue. Residues 77–78, N163, N197, and 215–216 contribute to the substrate site; these read GN and ER. The active-site Proton acceptor is the C224. Residue 225–226 participates in substrate binding; sequence GS. The segment at 278–303 is disordered; the sequence is FDPATGEWSRDTQGLQGSGNADRGAA.

This sequence belongs to the diaminopimelate epimerase family. As to quaternary structure, homodimer.

The protein resides in the cytoplasm. It carries out the reaction (2S,6S)-2,6-diaminopimelate = meso-2,6-diaminopimelate. It functions in the pathway amino-acid biosynthesis; L-lysine biosynthesis via DAP pathway; DL-2,6-diaminopimelate from LL-2,6-diaminopimelate: step 1/1. Its function is as follows. Catalyzes the stereoinversion of LL-2,6-diaminopimelate (L,L-DAP) to meso-diaminopimelate (meso-DAP), a precursor of L-lysine and an essential component of the bacterial peptidoglycan. In Brucella abortus (strain S19), this protein is Diaminopimelate epimerase.